The following is a 203-amino-acid chain: GTP-binding protein YPTM2 (203 aa).

Residues 15–23 (GDSGVGKSC), 33–40 (YLDSYIST), 63–67 (DTAGQ), 121–124 (NKSD), and 151–153 (SAK) contribute to the GTP site. The short motif at 37–45 (YISTIGVDF) is the Effector region element. Residues Cys200 and Cys201 are each lipidated (S-geranylgeranyl cysteine).

It belongs to the small GTPase superfamily. Rab family. Its expression is weak in stems, higher in roots, leaves and coleoptiles, but highest in flowers.

The protein resides in the cell membrane. Its function is as follows. Protein transport. Probably involved in vesicular traffic. The chain is GTP-binding protein YPTM2 (YPTM2) from Zea mays (Maize).